A 224-amino-acid chain; its full sequence is Uracil-DNA glycosylase 2 (224 aa).

Asp-64 (proton acceptor) is an active-site residue.

Belongs to the uracil-DNA glycosylase (UDG) superfamily. UNG family.

It localises to the cytoplasm. The enzyme catalyses Hydrolyzes single-stranded DNA or mismatched double-stranded DNA and polynucleotides, releasing free uracil.. Functionally, excises uracil residues from the DNA which can arise as a result of misincorporation of dUMP residues by DNA polymerase or due to deamination of cytosine. This chain is Uracil-DNA glycosylase 2, found in Listeria innocua serovar 6a (strain ATCC BAA-680 / CLIP 11262).